Here is a 184-residue protein sequence, read N- to C-terminus: Shikimate kinase (184 aa).

G17–T22 is an ATP binding site. Residue T21 participates in Mg(2+) binding. The substrate site is built by D39, R63, and G85. Residue R123 coordinates ATP. R142 serves as a coordination point for substrate.

This sequence belongs to the shikimate kinase family. In terms of assembly, monomer. The cofactor is Mg(2+).

The protein localises to the cytoplasm. It carries out the reaction shikimate + ATP = 3-phosphoshikimate + ADP + H(+). The protein operates within metabolic intermediate biosynthesis; chorismate biosynthesis; chorismate from D-erythrose 4-phosphate and phosphoenolpyruvate: step 5/7. Functionally, catalyzes the specific phosphorylation of the 3-hydroxyl group of shikimic acid using ATP as a cosubstrate. The protein is Shikimate kinase of Burkholderia pseudomallei (strain 1710b).